A 182-amino-acid chain; its full sequence is UPF0200 protein Mthe_1012 (182 aa).

8-15 (GMPGSGKS) contributes to the ATP binding site.

This sequence belongs to the UPF0200 family.

The sequence is that of UPF0200 protein Mthe_1012 from Methanothrix thermoacetophila (strain DSM 6194 / JCM 14653 / NBRC 101360 / PT) (Methanosaeta thermophila).